We begin with the raw amino-acid sequence, 259 residues long: MLFVLDAGNTNIVLGIYKGKELVLECRLGTDAKRTADEYGIQVLKLLSHNNIDPKDIEGVIISSVVPNIMYSIEHMIRKYFKIDPIVVGPGVKTGINIKYDNPKSVGADRIVNAVAAHALFEKPLVIIDFGTATTYCAVTKKGDYLGGAICPGIKISAAALFEKAAKLPRIELIKPPHVICKNTVSSMQAGIVYGYIGQVDYIVSKIKEEMIALGEGEPYVIATGGFAGLISEESKTIDEVCPFLTLEGLRVIYEKNKE.

Position 6 to 13 (6 to 13 (DAGNTNIV)) interacts with ATP. Substrate is bound by residues Tyr100 and 107-110 (GADR). Residue Asp109 is the Proton acceptor of the active site. Asp129 serves as a coordination point for K(+). Position 132 (Thr132) interacts with ATP. Thr184 contributes to the substrate binding site.

Belongs to the type III pantothenate kinase family. Homodimer. The cofactor is NH4(+). It depends on K(+) as a cofactor.

It localises to the cytoplasm. It catalyses the reaction (R)-pantothenate + ATP = (R)-4'-phosphopantothenate + ADP + H(+). It functions in the pathway cofactor biosynthesis; coenzyme A biosynthesis; CoA from (R)-pantothenate: step 1/5. Its function is as follows. Catalyzes the phosphorylation of pantothenate (Pan), the first step in CoA biosynthesis. In Clostridium novyi (strain NT), this protein is Type III pantothenate kinase.